A 330-amino-acid polypeptide reads, in one-letter code: Alpha/beta hydrolase domain-containing protein VTE7 (330 aa).

The region spanning 84 to 315 is the AB hydrolase-1 domain; it reads VVLLHCFDSS…GHLPHVENPK (232 aa). The active-site Nucleophile is serine 157. Residues aspartate 279 and histidine 307 each act as charge relay system in the active site.

Belongs to the AB hydrolase superfamily.

The protein localises to the plastid. It is found in the chloroplast envelope. In terms of biological role, hydrolase involved in tocopherol (vitamin E) biosynthesis. Releases prenyl alcohols from chlorophyll biosynthetic intermediates, which are then converted to the corresponding diphosphates for tocopherol biosynthesis. Provides most of the phytol from chlorophyll for tocopherol biosynthesis in seeds. The polypeptide is Alpha/beta hydrolase domain-containing protein VTE7 (Arabidopsis thaliana (Mouse-ear cress)).